Consider the following 115-residue polypeptide: NAD(P)H-quinone oxidoreductase subunit M (115 aa).

Belongs to the complex I NdhM subunit family. NDH-1 can be composed of about 15 different subunits; different subcomplexes with different compositions have been identified which probably have different functions.

It localises to the cellular thylakoid membrane. The enzyme catalyses a plastoquinone + NADH + (n+1) H(+)(in) = a plastoquinol + NAD(+) + n H(+)(out). It catalyses the reaction a plastoquinone + NADPH + (n+1) H(+)(in) = a plastoquinol + NADP(+) + n H(+)(out). In terms of biological role, NDH-1 shuttles electrons from an unknown electron donor, via FMN and iron-sulfur (Fe-S) centers, to quinones in the respiratory and/or the photosynthetic chain. The immediate electron acceptor for the enzyme in this species is believed to be plastoquinone. Couples the redox reaction to proton translocation, and thus conserves the redox energy in a proton gradient. Cyanobacterial NDH-1 also plays a role in inorganic carbon-concentration. This Prochlorococcus marinus (strain MIT 9211) protein is NAD(P)H-quinone oxidoreductase subunit M.